The chain runs to 293 residues: Pantothenate synthetase (293 aa).

30–37 (MGYLHKGH) contacts ATP. The active-site Proton donor is His37. Residue Gln61 participates in (R)-pantoate binding. Gln61 provides a ligand contact to beta-alanine. Residue 147 to 150 (GEKD) coordinates ATP. Gln153 provides a ligand contact to (R)-pantoate. Residues Val176 and 184–187 (CSSR) each bind ATP.

Belongs to the pantothenate synthetase family. In terms of assembly, homodimer.

Its subcellular location is the cytoplasm. It carries out the reaction (R)-pantoate + beta-alanine + ATP = (R)-pantothenate + AMP + diphosphate + H(+). It functions in the pathway cofactor biosynthesis; (R)-pantothenate biosynthesis; (R)-pantothenate from (R)-pantoate and beta-alanine: step 1/1. In terms of biological role, catalyzes the condensation of pantoate with beta-alanine in an ATP-dependent reaction via a pantoyl-adenylate intermediate. This Brucella canis (strain ATCC 23365 / NCTC 10854 / RM-666) protein is Pantothenate synthetase.